A 251-amino-acid chain; its full sequence is Pyrroloquinoline-quinone synthase (251 aa).

The protein belongs to the PqqC family.

It catalyses the reaction 6-(2-amino-2-carboxyethyl)-7,8-dioxo-1,2,3,4,7,8-hexahydroquinoline-2,4-dicarboxylate + 3 O2 = pyrroloquinoline quinone + 2 H2O2 + 2 H2O + H(+). It participates in cofactor biosynthesis; pyrroloquinoline quinone biosynthesis. In terms of biological role, ring cyclization and eight-electron oxidation of 3a-(2-amino-2-carboxyethyl)-4,5-dioxo-4,5,6,7,8,9-hexahydroquinoline-7,9-dicarboxylic-acid to PQQ. This Pseudomonas syringae pv. syringae (strain B728a) protein is Pyrroloquinoline-quinone synthase.